We begin with the raw amino-acid sequence, 375 residues long: Chaperone protein DnaJ (375 aa).

One can recognise a J domain in the interval 5–69 (DYYEVLGVGK…QKRAHYDQFG (65 aa)). A CR-type zinc finger spans residues 132 to 214 (GKETTIEIPR…CGGTGKVKKR (83 aa)). 8 residues coordinate Zn(2+): cysteine 145, cysteine 148, cysteine 162, cysteine 165, cysteine 188, cysteine 191, cysteine 202, and cysteine 205. CXXCXGXG motif repeat units lie at residues 145-152 (CETCSGSG), 162-169 (CSHCGGSG), 188-195 (CHYCNGTG), and 202-209 (CSTCGGTG).

The protein belongs to the DnaJ family. As to quaternary structure, homodimer. Zn(2+) serves as cofactor.

The protein localises to the cytoplasm. Its function is as follows. Participates actively in the response to hyperosmotic and heat shock by preventing the aggregation of stress-denatured proteins and by disaggregating proteins, also in an autonomous, DnaK-independent fashion. Unfolded proteins bind initially to DnaJ; upon interaction with the DnaJ-bound protein, DnaK hydrolyzes its bound ATP, resulting in the formation of a stable complex. GrpE releases ADP from DnaK; ATP binding to DnaK triggers the release of the substrate protein, thus completing the reaction cycle. Several rounds of ATP-dependent interactions between DnaJ, DnaK and GrpE are required for fully efficient folding. Also involved, together with DnaK and GrpE, in the DNA replication of plasmids through activation of initiation proteins. The sequence is that of Chaperone protein DnaJ from Bacillus licheniformis (strain ATCC 14580 / DSM 13 / JCM 2505 / CCUG 7422 / NBRC 12200 / NCIMB 9375 / NCTC 10341 / NRRL NRS-1264 / Gibson 46).